Reading from the N-terminus, the 316-residue chain is MICENHTRVTEFILLGFTNNPEMQVSLFIFFLAIYTVTLLGNFLIVTVTSVDLALQTPMYFFLQNLSLLEVCFTLVMVPKMLVDLVSPRKIISFVGCGTQMYFFFFFGSSECFLLSMMAYDRFVAICNPLHYSVIMNRSLCLWMAIGSWMSGVPVSMLQTAWMMALPFCGPNAVDHFFCDGPPVLKLVTVDTTMYEMQALASTLLFIMFPFCLILVSYTRIIITILRMSSATGRQKAFSTCSSHLIVVSLFYGTASLTYLRPKSNQSPESKKLVSLSYTVITPMLNPIIYGLRNNEVKGAVKRTITQKVLQKLDVF.

The Extracellular portion of the chain corresponds to 1 to 25 (MICENHTRVTEFILLGFTNNPEMQV). Asparagine 5 carries N-linked (GlcNAc...) asparagine glycosylation. A helical membrane pass occupies residues 26 to 46 (SLFIFFLAIYTVTLLGNFLIV). Over 47 to 54 (TVTSVDLA) the chain is Cytoplasmic. The chain crosses the membrane as a helical span at residues 55–75 (LQTPMYFFLQNLSLLEVCFTL). Topologically, residues 76 to 99 (VMVPKMLVDLVSPRKIISFVGCGT) are extracellular. Residues 100-120 (QMYFFFFFGSSECFLLSMMAY) traverse the membrane as a helical segment. At 121–139 (DRFVAICNPLHYSVIMNRS) the chain is on the cytoplasmic side. A helical transmembrane segment spans residues 140-160 (LCLWMAIGSWMSGVPVSMLQT). Over 161–197 (AWMMALPFCGPNAVDHFFCDGPPVLKLVTVDTTMYEM) the chain is Extracellular. A helical membrane pass occupies residues 198 to 217 (QALASTLLFIMFPFCLILVS). The Cytoplasmic segment spans residues 218-237 (YTRIIITILRMSSATGRQKA). A helical membrane pass occupies residues 238 to 258 (FSTCSSHLIVVSLFYGTASLT). The Extracellular segment spans residues 259 to 271 (YLRPKSNQSPESK). Residues 272–292 (KLVSLSYTVITPMLNPIIYGL) traverse the membrane as a helical segment. Over 293–316 (RNNEVKGAVKRTITQKVLQKLDVF) the chain is Cytoplasmic.

Belongs to the G-protein coupled receptor 1 family.

It localises to the cell membrane. In terms of biological role, odorant receptor. This is Olfactory receptor 10A7 (OR10A7) from Homo sapiens (Human).